Here is a 363-residue protein sequence, read N- to C-terminus: Peptide chain release factor 2 (363 aa).

Q251 is modified (N5-methylglutamine).

Belongs to the prokaryotic/mitochondrial release factor family. Post-translationally, methylated by PrmC. Methylation increases the termination efficiency of RF2.

Its subcellular location is the cytoplasm. In terms of biological role, peptide chain release factor 2 directs the termination of translation in response to the peptide chain termination codons UGA and UAA. This is Peptide chain release factor 2 from Helicobacter pylori (strain P12).